The primary structure comprises 440 residues: Xylose isomerase (440 aa).

Asp-307 and Asp-309 together coordinate Mg(2+).

It belongs to the xylose isomerase family. In terms of assembly, homotetramer. Mg(2+) serves as cofactor.

Its subcellular location is the cytoplasm. The catalysed reaction is alpha-D-xylose = alpha-D-xylulofuranose. In Pectobacterium carotovorum subsp. carotovorum (strain PC1), this protein is Xylose isomerase.